The sequence spans 342 residues: Ribosomal RNA small subunit methyltransferase C (342 aa).

This sequence belongs to the methyltransferase superfamily. RsmC family. In terms of assembly, monomer.

Its subcellular location is the cytoplasm. The enzyme catalyses guanosine(1207) in 16S rRNA + S-adenosyl-L-methionine = N(2)-methylguanosine(1207) in 16S rRNA + S-adenosyl-L-homocysteine + H(+). Functionally, specifically methylates the guanine in position 1207 of 16S rRNA in the 30S particle. This chain is Ribosomal RNA small subunit methyltransferase C, found in Salmonella enteritidis PT4 (strain P125109).